A 283-amino-acid polypeptide reads, in one-letter code: ATP phosphoribosyltransferase (283 aa).

It belongs to the ATP phosphoribosyltransferase family. Long subfamily. It depends on Mg(2+) as a cofactor.

It is found in the cytoplasm. The enzyme catalyses 1-(5-phospho-beta-D-ribosyl)-ATP + diphosphate = 5-phospho-alpha-D-ribose 1-diphosphate + ATP. It functions in the pathway amino-acid biosynthesis; L-histidine biosynthesis; L-histidine from 5-phospho-alpha-D-ribose 1-diphosphate: step 1/9. Feedback inhibited by histidine. In terms of biological role, catalyzes the condensation of ATP and 5-phosphoribose 1-diphosphate to form N'-(5'-phosphoribosyl)-ATP (PR-ATP). Has a crucial role in the pathway because the rate of histidine biosynthesis seems to be controlled primarily by regulation of HisG enzymatic activity. The polypeptide is ATP phosphoribosyltransferase (Phocaeicola vulgatus (strain ATCC 8482 / DSM 1447 / JCM 5826 / CCUG 4940 / NBRC 14291 / NCTC 11154) (Bacteroides vulgatus)).